The following is a 273-amino-acid chain: SPRY domain-containing SOCS box protein 4 (273 aa).

The B30.2/SPRY domain occupies 34–233; sequence PARLDQLLDM…MRYINGLDPE (200 aa). Residues 234–273 form the SOCS box domain; that stretch reads PLPLMDLCRRSIRSALGRQRLRDIGSLPLPQSLKNYLQYQ.

This sequence belongs to the SPSB family. Component of the probable ECS(SPSB4) E3 ubiquitin-protein ligase complex which contains CUL5, RNF7/RBX2, Elongin BC complex and SPSB4. Interacts with CUL5; RNF7; ELOB and ELOC. Interacts with MET. Interacts (via B30.2/SPRY domain) with PAWR; this interaction occurs in association with the Elongin BC complex. Interacts with NOS2. Interacts with EPHB2.

The protein resides in the cytoplasm. It is found in the cytosol. It functions in the pathway protein modification; protein ubiquitination. In terms of biological role, substrate recognition component of a SCF-like ECS (Elongin BC-CUL2/5-SOCS-box protein) E3 ubiquitin-protein ligase complex which mediates the ubiquitination and subsequent proteasomal degradation of target proteins. Negatively regulates nitric oxide (NO) production and limits cellular toxicity in activated macrophages by mediating the ubiquitination and proteasomal degradation of NOS2. Acts as a bridge which links NOS2 with the ECS E3 ubiquitin ligase complex components ELOC and CUL5. Diminishes EphB2-dependent cell repulsive responses by mediating the ubiquitination and degradation of the EphB2/CTF2. Regulates cellular clock function by mediating ubiquitination and proteasomal degradation of the circadian transcriptional repressor NR1D1. The sequence is that of SPRY domain-containing SOCS box protein 4 (Spsb4) from Mus musculus (Mouse).